The chain runs to 141 residues: MAKKVINVVKLQIPAGAATPAPPVGPALGQAGINIVGFTKDFNARTADQKGMIIPVVITVYEDRSFDFVTKTPPAPVLLKQAAGIQKASGEPNKNKVGSVTTAQVKEIAETKMKDLNAASIEAAMRMVEGTARSMGIEVKD.

The protein belongs to the universal ribosomal protein uL11 family. In terms of assembly, part of the ribosomal stalk of the 50S ribosomal subunit. Interacts with L10 and the large rRNA to form the base of the stalk. L10 forms an elongated spine to which L12 dimers bind in a sequential fashion forming a multimeric L10(L12)X complex. One or more lysine residues are methylated.

Forms part of the ribosomal stalk which helps the ribosome interact with GTP-bound translation factors. This chain is Large ribosomal subunit protein uL11, found in Lactobacillus delbrueckii subsp. bulgaricus (strain ATCC 11842 / DSM 20081 / BCRC 10696 / JCM 1002 / NBRC 13953 / NCIMB 11778 / NCTC 12712 / WDCM 00102 / Lb 14).